Here is a 695-residue protein sequence, read N- to C-terminus: Polyribonucleotide nucleotidyltransferase (695 aa).

The Mg(2+) site is built by aspartate 486 and aspartate 492. Residues 553 to 612 (PRIETMQINTSKIATVIGPGGKQIRQIIERSGAQVDINDDGVINIAASTQESINKAKELI) form the KH domain. The S1 motif domain occupies 622–690 (GKVYNGRVTS…EKGQLKLSHK (69 aa)).

This sequence belongs to the polyribonucleotide nucleotidyltransferase family. Mg(2+) serves as cofactor.

Its subcellular location is the cytoplasm. The enzyme catalyses RNA(n+1) + phosphate = RNA(n) + a ribonucleoside 5'-diphosphate. Functionally, involved in mRNA degradation. Catalyzes the phosphorolysis of single-stranded polyribonucleotides processively in the 3'- to 5'-direction. This chain is Polyribonucleotide nucleotidyltransferase, found in Chlamydia trachomatis serovar A (strain ATCC VR-571B / DSM 19440 / HAR-13).